Reading from the N-terminus, the 152-residue chain is Protein D1 (152 aa).

The protein belongs to the phosphatidylethanolamine-binding protein family.

This Onchocerca volvulus protein is Protein D1 (D1).